Reading from the N-terminus, the 359-residue chain is Fructose-bisphosphate aldolase class 2 (359 aa).

Position 9 is an N6-acetyllysine (lysine 9). Serine 62 contributes to the D-glyceraldehyde 3-phosphate binding site. Residue aspartate 110 is the Proton donor of the active site. Residues histidine 111, aspartate 145, glutamate 175, and histidine 227 each contribute to the Zn(2+) site. Glycine 228 is a dihydroxyacetone phosphate binding site. Residue histidine 265 participates in Zn(2+) binding. Dihydroxyacetone phosphate contacts are provided by residues 266-268 and 287-290; these read GGS and NIDT.

It belongs to the class II fructose-bisphosphate aldolase family. In terms of assembly, homodimer. The cofactor is Zn(2+).

It catalyses the reaction beta-D-fructose 1,6-bisphosphate = D-glyceraldehyde 3-phosphate + dihydroxyacetone phosphate. Its pathway is carbohydrate degradation; glycolysis; D-glyceraldehyde 3-phosphate and glycerone phosphate from D-glucose: step 4/4. Catalyzes the aldol condensation of dihydroxyacetone phosphate (DHAP or glycerone-phosphate) with glyceraldehyde 3-phosphate (G3P) to form fructose 1,6-bisphosphate (FBP) in gluconeogenesis and the reverse reaction in glycolysis. The polypeptide is Fructose-bisphosphate aldolase class 2 (fbaA) (Escherichia coli O157:H7).